Consider the following 541-residue polypeptide: Membrane protein insertase YidC (541 aa).

The next 6 membrane-spanning stretches (helical) occupy residues Phe-7–His-27, Tyr-289–Pro-309, Ile-356–Tyr-376, Leu-430–Val-450, Leu-463–Gln-483, and Ile-498–Val-518.

Belongs to the OXA1/ALB3/YidC family. Type 1 subfamily. Interacts with the Sec translocase complex via SecD. Specifically interacts with transmembrane segments of nascent integral membrane proteins during membrane integration.

The protein resides in the cell inner membrane. Functionally, required for the insertion and/or proper folding and/or complex formation of integral membrane proteins into the membrane. Involved in integration of membrane proteins that insert both dependently and independently of the Sec translocase complex, as well as at least some lipoproteins. Aids folding of multispanning membrane proteins. This is Membrane protein insertase YidC from Ruthia magnifica subsp. Calyptogena magnifica.